A 398-amino-acid polypeptide reads, in one-letter code: MAVFKLIKPAPLTEKVQSRQGNIYLYRAMWLIGWIPPKEGVLRYVYLFWTCVPFAFGVFYLPVGFIISYVQEFKNFTPGEFLTSLQVCINVYGASVKSTITYLFLWRLRKTEILLDSLDKRLANDSDRERIHNMVARCNYAFLIYSFIYCGYAGSTFLSYALSGRPPWSVYNPFIDWRDGMGSLWIQAIFEYITMSFAVLQDQLSDTYPLMFTIMFRAHMEVLKDHVRSLRMDPERSEADNYQDLVNCVLDHKTILKCCDMIRPMISRTIFVQFALIGSVLGLTLVNVFFFSNFWKGVASLLFVITILLQTFPFCYTCNMLIDDAQDLSNEIFQSNWVDAEPRYKATLVLFMHHVQQPIIFIAGGIFPISMNSNITVAKFAFSIITIVRQMNLAEQFQ.

The Cytoplasmic segment spans residues 1–46 (MAVFKLIKPAPLTEKVQSRQGNIYLYRAMWLIGWIPPKEGVLRYVY). Residues 47-67 (LFWTCVPFAFGVFYLPVGFII) traverse the membrane as a helical segment. Residues 68–84 (SYVQEFKNFTPGEFLTS) lie on the Extracellular side of the membrane. A helical transmembrane segment spans residues 85 to 105 (LQVCINVYGASVKSTITYLFL). Over 106–141 (WRLRKTEILLDSLDKRLANDSDRERIHNMVARCNYA) the chain is Cytoplasmic. The helical transmembrane segment at 142–162 (FLIYSFIYCGYAGSTFLSYAL) threads the bilayer. Topologically, residues 163–179 (SGRPPWSVYNPFIDWRD) are extracellular. A helical membrane pass occupies residues 180 to 200 (GMGSLWIQAIFEYITMSFAVL). The Cytoplasmic segment spans residues 201–269 (QDQLSDTYPL…DMIRPMISRT (69 aa)). Residues 270-290 (IFVQFALIGSVLGLTLVNVFF) form a helical membrane-spanning segment. Over 291–293 (FSN) the chain is Extracellular. The chain crosses the membrane as a helical span at residues 294 to 314 (FWKGVASLLFVITILLQTFPF). Over 315-348 (CYTCNMLIDDAQDLSNEIFQSNWVDAEPRYKATL) the chain is Cytoplasmic. A helical transmembrane segment spans residues 349–369 (VLFMHHVQQPIIFIAGGIFPI). Topologically, residues 370-398 (SMNSNITVAKFAFSIITIVRQMNLAEQFQ) are extracellular. N-linked (GlcNAc...) asparagine glycosylation occurs at Asn374.

Belongs to the insect chemoreceptor superfamily. Heteromeric odorant receptor channel (TC 1.A.69) family. Or2a subfamily. As to quaternary structure, interacts with Orco. Complexes exist early in the endomembrane system in olfactory sensory neurons (OSNs), coupling these complexes to the conserved ciliary trafficking pathway. In terms of tissue distribution, expressed in olfactory sensory neurons in the antenna.

The protein localises to the cell membrane. Functionally, odorant receptor which mediates acceptance or avoidance behavior, depending on its substrates. The odorant receptor repertoire encodes a large collection of odor stimuli that vary widely in identity, intensity, and duration. Forms a complex with Orco to form odorant-sensing units, providing sensitive and prolonged odorant signaling and calcium permeability. Also plays a role in the response to N,N-Diethyl-meta-toluamide (DEET), the most widely used insect repellent worldwide. The protein is Odorant receptor 59b (Or59b) of Drosophila melanogaster (Fruit fly).